We begin with the raw amino-acid sequence, 200 residues long: CASP-like protein 1U2 (200 aa).

Residues Met1–Asn33 are Cytoplasmic-facing. Residues Phe34 to Ser54 traverse the membrane as a helical segment. At Thr55–Trp77 the chain is on the extracellular side. The helical transmembrane segment at Leu78–Phe98 threads the bilayer. At Ser99 to Asp120 the chain is on the cytoplasmic side. A helical transmembrane segment spans residues Phe121 to Ala141. Over Arg142–Gln168 the chain is Extracellular. Residues Gly169–Ala189 form a helical membrane-spanning segment. At Ser190–His200 the chain is on the cytoplasmic side.

This sequence belongs to the Casparian strip membrane proteins (CASP) family. Homodimer and heterodimers.

The protein resides in the cell membrane. In Physcomitrium patens (Spreading-leaved earth moss), this protein is CASP-like protein 1U2.